A 367-amino-acid chain; its full sequence is Alpha-2-HS-glycoprotein (367 aa).

Positions 1-18 (MKSLVLLLCLAQLWGCHS) are cleaved as a signal peptide. In terms of domain architecture, Cystatin fetuin-A-type 1 spans 27–133 (YRQPNCDDPE…KFSVVYAKCD (107 aa)). 6 disulfides stabilise this stretch: cysteine 32/cysteine 358, cysteine 89/cysteine 100, cysteine 114/cysteine 132, cysteine 146/cysteine 149, cysteine 208/cysteine 219, and cysteine 230/cysteine 247. At serine 134 the chain carries Phosphoserine. Phosphoserine; by FAM20C occurs at positions 135 and 138. The region spanning 144–255 (KVCQDCPLLA…TCMVFQTQPV (112 aa)) is the Cystatin fetuin-A-type 2 domain. Asparagine 156 and asparagine 176 each carry an N-linked (GlcNAc...) (complex) asparagine glycan. The segment at 255 to 298 (VSSQPQPEGANEAVPTPVVDPDAPPSPPLGAPGLPPAGSPPDSH) is disordered. The O-linked (GalNAc...) threonine glycan is linked to threonine 270. Positions 276 to 293 (DAPPSPPLGAPGLPPAGS) are enriched in pro residues. 2 O-linked (GalNAc...) serine glycosylation sites follow: serine 280 and serine 293. Positions 301 to 340 (LAAPPGHQLHRAHYDLRHTFMGVVSLGSPSGEVSHPRKTR) are cleaved as a propeptide — connecting peptide. At threonine 319 the chain carries Phosphothreonine; by FAM20C. 3 positions are modified to phosphoserine; by FAM20C: serine 325, serine 328, and serine 330. O-linked (GalNAc...) threonine glycans are attached at residues threonine 339 and threonine 341. The O-linked (GalNAc...) serine glycan is linked to serine 346.

Belongs to the fetuin family. In terms of assembly, alpha-2-HS glycoprotein derives from this precursor, when the connecting peptide is cleaved off. The two chains A and B are held together by a single disulfide bond. In terms of processing, phosphorylated by FAM20C in the extracellular medium. O- and N-glycosylated. O-glycosylated with core 1 or possibly core 8 glycans. N-glycan at Asn-156: Hex5HexNAc4; N-glycan heterogeneity at Asn-176: Hex5HexNAc4 (major) and Hex6HexNAc5 (minor). In terms of tissue distribution, synthesized in liver and selectively concentrated in bone matrix. Secreted in plasma. It is also found in dentin in much higher quantities than other plasma proteins.

It localises to the secreted. Functionally, promotes endocytosis, possesses opsonic properties and influences the mineral phase of bone. Shows affinity for calcium and barium ions. This Homo sapiens (Human) protein is Alpha-2-HS-glycoprotein (AHSG).